We begin with the raw amino-acid sequence, 187 residues long: Large ribosomal subunit protein bL17 (187 aa).

The disordered stretch occupies residues 122–187 (PKVRSSRTST…EADAAEKSDK (66 aa)). Residues 127-144 (SRTSTATAPAAAAPAAEA) show a composition bias toward low complexity. 2 stretches are compositionally biased toward acidic residues: residues 145-157 (PAEE…EETD) and 165-180 (TPAE…VEAD).

Belongs to the bacterial ribosomal protein bL17 family. In terms of assembly, part of the 50S ribosomal subunit. Contacts protein L32.

This is Large ribosomal subunit protein bL17 from Clavibacter michiganensis subsp. michiganensis (strain NCPPB 382).